A 427-amino-acid chain; its full sequence is MTAIVIVGAQWGDEGKGKVVDLYTESADLVVRYAGGPNAGHTLVVGGEKLIVRLIPSGILRSNARCVMAQGMVVDPGVLVSEIDAVEARGCSTQGRLFVSDRAHLILPFHPLVDSLREAAAADGVRLGTTKRGIGPCYEDKASRRGARLGDLRDMKRLAQLVSRSLEAWTPTLRALGGEPPSLDAILDELTPLAKRITPLLADTSQLIDGALRRGERVLLEGAQGTLLDIDHGTFPFVTSSSAIAGGACVGAGVGPTRIRRVLGLAKAYCTRVGEGPFPTELDGPLGERLRSVGGEYGSVTGRPRRTGWLDLPALRYAARVNGLDGIALTKLDVLTGMPELKVCVAYDTPSGRTREFPIDDIATAKPVLETVAEWSEPIDAARSMTELPAAARHYVEMVEKETGVPVDVVSVGADREATIVRRNAFA.

GTP-binding positions include 12–18 (GDEGKGK) and 40–42 (GHT). Catalysis depends on Asp13, which acts as the Proton acceptor. Positions 13 and 40 each coordinate Mg(2+). Residues 13 to 16 (DEGK), 38 to 41 (NAGH), Thr130, Arg144, Gln224, Thr239, and Arg303 contribute to the IMP site. His41 serves as the catalytic Proton donor. 299–305 (SVTGRPR) serves as a coordination point for substrate. Residues Arg305, 331 to 333 (KLD), and 411 to 413 (SVG) each bind GTP.

This sequence belongs to the adenylosuccinate synthetase family. In terms of assembly, homodimer. The cofactor is Mg(2+).

It is found in the cytoplasm. The catalysed reaction is IMP + L-aspartate + GTP = N(6)-(1,2-dicarboxyethyl)-AMP + GDP + phosphate + 2 H(+). Its pathway is purine metabolism; AMP biosynthesis via de novo pathway; AMP from IMP: step 1/2. Functionally, plays an important role in the de novo pathway of purine nucleotide biosynthesis. Catalyzes the first committed step in the biosynthesis of AMP from IMP. In Sorangium cellulosum (strain So ce56) (Polyangium cellulosum (strain So ce56)), this protein is Adenylosuccinate synthetase.